Reading from the N-terminus, the 1009-residue chain is MICAL-like protein 2 (1009 aa).

Residues 1–107 (MAAIKALQEW…YVSQYYNYFH (107 aa)) form the Calponin-homology (CH) domain. The segment at 1 to 260 (MAAIKALQEW…KSSNLASRKP (260 aa)) is forms an intramolecular interaction with the C-terminal coiled coil domain keeping the protein in a closed conformation. 3 positions are modified to phosphoserine: S110, S143, and S153. Disordered regions lie at residues 114–180 (GMAG…PGTA), 247–268 (SVSP…ADTR), 348–447 (NSSP…TSKV), and 655–834 (SPSI…TSPV). Over residues 144–171 (PAQTQRSPLSPARTNPVVQRNEGGSQRP) the composition is skewed to polar residues. Residues 186–248 (SICGVCGKHV…THHSSEVTSV (63 aa)) enclose the LIM zinc-binding domain. S249 is modified (phosphoserine). The necessary and sufficient for interaction with actinins stretch occupies residues 261–393 (GGVTADTRPF…QGQTASKGVK (133 aa)). Positions 261 to 805 (GGVTADTRPF…EDGTRSCKEE (545 aa)) are mediates targeting to the cell plasma membrane. Polar residues predominate over residues 348-419 (NSSPIGWSSP…AWTSSASKTQ (72 aa)). Residues 430–442 (PSAPAPASAPAPA) are compositionally biased toward pro residues. Basic and acidic residues predominate over residues 694 to 730 (EGWRARLKPVDKKTPAGRSLEQKEPVLAEPRIGDTSR). 2 stretches are compositionally biased toward low complexity: residues 731 to 746 (KASS…TLTS) and 755 to 769 (PAGS…SPSP). Residues S766 and S768 each carry the phosphoserine modification. Residues 791-817 (EPKKQEDGTRSCKEEKSPTRWSRERSA) are compositionally biased toward basic and acidic residues. Positions 806 to 913 (KSPTRWSRER…LMYKSKDQRL (108 aa)) are forms an intramolecular interaction with the N-terminal Calponin-homology and LIM zinc-binding domains-containing region keeping the protein in a closed conformation. Phosphoserine is present on S832. In terms of domain architecture, bMERB spans 833–980 (PVRLHPDYIP…EQEEDQMLEN (148 aa)). A coiled-coil region spans residues 841–880 (IPQEELQRQLQDIESQLDALELRGVELEKRLRAAEGDASE). A mediates interaction with RAB13 and is required for transition from the closed to the open conformation region spans residues 913-1009 (LEEQQLDLQG…WSSKSKSGQA (97 aa)).

Interacts with RAB13 (GTP-bound form); competes with RAB8A and is involved in tight junctions assembly. Interacts with RAB8A; competes with RAB13 and is involved in E-cadherin endocytic recycling. Interacts with RAB8B. Interacts (preferentially in opened conformation) with ACTN1 and ACTN4; stimulated by RAB13 activation. Interacts (via calponin-homology (CH) domain) with the filamins FLNA, FLNB and FLNC (via actin-binding domain). As to expression, detected in brain, lung, liver and kidney (at protein level).

It localises to the cell membrane. The protein resides in the cell junction. It is found in the tight junction. Its subcellular location is the recycling endosome. The protein localises to the cell projection. It localises to the neuron projection. The protein resides in the cytoplasm. It is found in the cytoskeleton. Functionally, effector of small Rab GTPases RAB8A and RAB13 which is involved in junctional complexes assembly through the regulation of cell adhesion molecules transport to the plasma membrane and actin cytoskeleton reorganization. Regulates the endocytic recycling of occludins, claudins and E-cadherin to the plasma membrane and may thereby regulate the establishment of tight junctions and adherens junctions. In parallel, may regulate actin cytoskeleton reorganization directly through interaction with F-actin or indirectly through actinins and filamins. Undergoes liquid-liquid phase separation to form tubular recycling endosomes. Plays 2 sequential roles in the biogenesis of tubular recycling endosomes: first organizes phase separation and then the closed form formed by interaction with RAB8A promotes endosomal tubulation. This chain is MICAL-like protein 2 (Micall2), found in Mus musculus (Mouse).